Consider the following 349-residue polypeptide: MIEFDNLTYLHGKPQGTGLLKANPEDFVVVEDLGFEPDGEGEHILVRILKNGCNTRFVADALAKFLKIHAREVSFAGQKDKHAVTEQWLCARVPGKEMPDLSAFQLEGCQVLEYARHKRKLRLGALKGNAFTLVLREVSNRDDVEQRLIDICVKGVPNYFGAQRFGIGGSNLQGALRWAQTNTPVRDRNKRSFWLSAARSALFNQIVAERLKKADVNQVVDGDALQLAGRGSWFVATTEELAELQRRVNDKELMITAALPGSGEWGTQREALAFEQAAVAEETELQTLLVREKVEAARRAMLLYPQQLSWNWWDDVTVEIRFWLPAGSFATSVVRELINTTGDYAHIAE.

Substrate is bound at residue Phe27. The active-site Nucleophile is the Asp80. Substrate is bound at residue Asn129. One can recognise a TRUD domain in the interval 155–303 (GVPNYFGAQR…VEAARRAMLL (149 aa)). A substrate-binding site is contributed by Phe329.

It belongs to the pseudouridine synthase TruD family.

It carries out the reaction uridine(13) in tRNA = pseudouridine(13) in tRNA. In terms of biological role, responsible for synthesis of pseudouridine from uracil-13 in transfer RNAs. The chain is tRNA pseudouridine synthase D from Escherichia coli O6:H1 (strain CFT073 / ATCC 700928 / UPEC).